A 92-amino-acid chain; its full sequence is Small ribosomal subunit protein uS19 (92 aa).

The segment at 73-92 (EFSPTRSFRGHAGAKNKGRK) is disordered. The segment covering 80–92 (FRGHAGAKNKGRK) has biased composition (basic residues).

It belongs to the universal ribosomal protein uS19 family.

Protein S19 forms a complex with S13 that binds strongly to the 16S ribosomal RNA. This chain is Small ribosomal subunit protein uS19, found in Christiangramia forsetii (strain DSM 17595 / CGMCC 1.15422 / KT0803) (Gramella forsetii).